We begin with the raw amino-acid sequence, 118 residues long: Large ribosomal subunit protein bL20 (118 aa).

The protein belongs to the bacterial ribosomal protein bL20 family.

Its function is as follows. Binds directly to 23S ribosomal RNA and is necessary for the in vitro assembly process of the 50S ribosomal subunit. It is not involved in the protein synthesizing functions of that subunit. The sequence is that of Large ribosomal subunit protein bL20 from Kosmotoga olearia (strain ATCC BAA-1733 / DSM 21960 / TBF 19.5.1).